The following is a 431-amino-acid chain: MAKIINVIGREIMDSRGNPTVEAEVHLEGGFIGMAAAPSGASTGSREALELRDGDKSRYLGKGVLTAVANVNGPIRAALIGKDATAQAELDQIMIDLDGTENKDKLGANAILAVSLAAAKAAAAFKGMPLYAHIAELNGTPGQYAMPVPMMNILNGGEHADNNVDIQEFMVQPVGAKNFREALRMGAEIFHTLKKVLHGKGLSTSVGDEGGFAPNLSSNADALAVIKEAVELAGYKLGTDVTLALDCAASEFYKDGKYDLSGEGKVFDSNGFSDFLKSLTEQYPIVSIEDGLDESDWDGWAYQTKIMGDKIQLVGDDLFVTNTKILTRGIENGIANSILIKFNQIGSLTETLAAIRMAKAAGYTAVISHRSGETEDSTIADLAVGTAAGQIKTGSLCRSDRVAKYNQLLRIEEQLGEKAPYRGLKEIKGQA.

Gln-167 lines the (2R)-2-phosphoglycerate pocket. The active-site Proton donor is the Glu-209. Residues Asp-246, Glu-289, and Asp-316 each contribute to the Mg(2+) site. Residues Lys-341, Arg-370, Ser-371, and Lys-392 each contribute to the (2R)-2-phosphoglycerate site. The Proton acceptor role is filled by Lys-341.

It belongs to the enolase family. As to quaternary structure, component of the RNA degradosome, a multiprotein complex involved in RNA processing and mRNA degradation. It depends on Mg(2+) as a cofactor.

It localises to the cytoplasm. The protein resides in the secreted. The protein localises to the cell surface. It catalyses the reaction (2R)-2-phosphoglycerate = phosphoenolpyruvate + H2O. Its pathway is carbohydrate degradation; glycolysis; pyruvate from D-glyceraldehyde 3-phosphate: step 4/5. Catalyzes the reversible conversion of 2-phosphoglycerate (2-PG) into phosphoenolpyruvate (PEP). It is essential for the degradation of carbohydrates via glycolysis. In Shewanella sp. (strain ANA-3), this protein is Enolase.